A 326-amino-acid chain; its full sequence is Large ribosomal subunit protein uL4 (326 aa).

Residues 1–211 form a large ribosomal subunit protein uL4 region; it reads MASCVVKNWQ…EKLKARWGSG (211 aa). Disordered stretches follow at residues 44 to 76 and 211 to 326; these read ARQG…ARAG and GAAA…EDND. Basic residues predominate over residues 60–71; sequence GGRKPWRQKGTG. Residues 212–326 are unknown; sequence AAAAAPTQAD…TAAAEEEDND (115 aa). Residues 221–238 show a composition bias toward basic and acidic residues; the sequence is DRLEDQAQAAEREARPVE. Composition is skewed to low complexity over residues 252-279 and 294-312; these read EAQA…QVQE and QGQA…PPAG. A compositionally biased stretch (acidic residues) spans 313 to 326; that stretch reads EEAETAAAEEEDND.

This sequence belongs to the universal ribosomal protein uL4 family. Part of the 50S ribosomal subunit.

One of the primary rRNA binding proteins, this protein initially binds near the 5'-end of the 23S rRNA. It is important during the early stages of 50S assembly. It makes multiple contacts with different domains of the 23S rRNA in the assembled 50S subunit and ribosome. In terms of biological role, forms part of the polypeptide exit tunnel. The protein is Large ribosomal subunit protein uL4 of Synechococcus sp. (strain JA-3-3Ab) (Cyanobacteria bacterium Yellowstone A-Prime).